A 141-amino-acid chain; its full sequence is Nucleoside diphosphate kinase (141 aa).

ATP contacts are provided by Lys11, Phe59, Arg87, Thr93, Arg104, and Asn114. His117 (pros-phosphohistidine intermediate) is an active-site residue.

The protein belongs to the NDK family. As to quaternary structure, homotetramer. Mg(2+) is required as a cofactor.

The protein localises to the cytoplasm. The enzyme catalyses a 2'-deoxyribonucleoside 5'-diphosphate + ATP = a 2'-deoxyribonucleoside 5'-triphosphate + ADP. It carries out the reaction a ribonucleoside 5'-diphosphate + ATP = a ribonucleoside 5'-triphosphate + ADP. Its function is as follows. Major role in the synthesis of nucleoside triphosphates other than ATP. The ATP gamma phosphate is transferred to the NDP beta phosphate via a ping-pong mechanism, using a phosphorylated active-site intermediate. The polypeptide is Nucleoside diphosphate kinase (Herminiimonas arsenicoxydans).